The primary structure comprises 330 residues: Anthranilate phosphoribosyltransferase (330 aa).

Residues G79, 82–83 (GD), T87, 89–92 (NIST), 107–115 (KHGNYGVSS), and S119 each bind 5-phospho-alpha-D-ribose 1-diphosphate. Anthranilate is bound at residue G79. S91 serves as a coordination point for Mg(2+). An anthranilate-binding site is contributed by N110. R165 lines the anthranilate pocket. Residues D223 and E224 each contribute to the Mg(2+) site.

The protein belongs to the anthranilate phosphoribosyltransferase family. Homodimer. Requires Mg(2+) as cofactor.

It carries out the reaction N-(5-phospho-beta-D-ribosyl)anthranilate + diphosphate = 5-phospho-alpha-D-ribose 1-diphosphate + anthranilate. It functions in the pathway amino-acid biosynthesis; L-tryptophan biosynthesis; L-tryptophan from chorismate: step 2/5. Functionally, catalyzes the transfer of the phosphoribosyl group of 5-phosphorylribose-1-pyrophosphate (PRPP) to anthranilate to yield N-(5'-phosphoribosyl)-anthranilate (PRA). In Flavobacterium psychrophilum (strain ATCC 49511 / DSM 21280 / CIP 103535 / JIP02/86), this protein is Anthranilate phosphoribosyltransferase.